A 297-amino-acid polypeptide reads, in one-letter code: Homoserine kinase (297 aa).

82–92 is an ATP binding site; that stretch reads PLTRGLGSSAS.

Belongs to the GHMP kinase family. Homoserine kinase subfamily.

It is found in the cytoplasm. The catalysed reaction is L-homoserine + ATP = O-phospho-L-homoserine + ADP + H(+). It functions in the pathway amino-acid biosynthesis; L-threonine biosynthesis; L-threonine from L-aspartate: step 4/5. Functionally, catalyzes the ATP-dependent phosphorylation of L-homoserine to L-homoserine phosphate. The chain is Homoserine kinase from Bacillus thuringiensis (strain Al Hakam).